Consider the following 125-residue polypeptide: MTNLLKKFNEQQMQVLAKEVPEFRPGDDLKVTFKVVDSTSERIQIFEGVCISKRNRGLHSSFAVRKVSHGESIVSQFFIYSPALVSVQVTRRGKVRRAKLYYLCKLFGKAARIKERATYKNNKSN.

Belongs to the bacterial ribosomal protein bL19 family.

Its function is as follows. This protein is located at the 30S-50S ribosomal subunit interface and may play a role in the structure and function of the aminoacyl-tRNA binding site. In Wolbachia sp. subsp. Brugia malayi (strain TRS), this protein is Large ribosomal subunit protein bL19.